A 230-amino-acid chain; its full sequence is Large ribosomal subunit protein uL1 (230 aa).

It belongs to the universal ribosomal protein uL1 family. In terms of assembly, part of the 50S ribosomal subunit.

Binds directly to 23S rRNA. The L1 stalk is quite mobile in the ribosome, and is involved in E site tRNA release. In terms of biological role, protein L1 is also a translational repressor protein, it controls the translation of the L11 operon by binding to its mRNA. The protein is Large ribosomal subunit protein uL1 of Lactobacillus acidophilus (strain ATCC 700396 / NCK56 / N2 / NCFM).